A 360-amino-acid chain; its full sequence is GDSL esterase/lipase At1g06990 (360 aa).

Residues 1-22 (MLIHVIIFMIITTMQFSTTCHA) form the signal peptide. 2 N-linked (GlcNAc...) asparagine glycosylation sites follow: N26 and N31. The active-site Nucleophile is the S44. N-linked (GlcNAc...) asparagine glycans are attached at residues N73, N126, and N272. Residues D335 and H338 contribute to the active site.

This sequence belongs to the 'GDSL' lipolytic enzyme family.

The protein resides in the secreted. This chain is GDSL esterase/lipase At1g06990, found in Arabidopsis thaliana (Mouse-ear cress).